Reading from the N-terminus, the 461-residue chain is Complement C1r subcomponent-like protein (461 aa).

The N-terminal stretch at methionine 1 to alanine 22 is a signal peptide. Residues glutamine 23 to alanine 139 form the CUB domain. 2 disulfide bridges follow: cysteine 71–cysteine 89 and cysteine 164–cysteine 197. Positions alanine 138 to proline 199 constitute a Sushi domain. The Peptidase S1 domain occupies threonine 214–glutamate 453. Residue histidine 252 is the Charge relay system of the active site. The N-linked (GlcNAc...) asparagine glycan is linked to asparagine 265. The Charge relay system role is filled by aspartate 308. Asparagine 332 carries an N-linked (GlcNAc...) asparagine glycan. Intrachain disulfides connect cysteine 371/cysteine 390 and cysteine 401/cysteine 431. Serine 405 acts as the Charge relay system in catalysis.

The protein belongs to the peptidase S1 family.

The protein localises to the secreted. Functionally, mediates the proteolytic cleavage of HP/haptoglobin in the endoplasmic reticulum. The polypeptide is Complement C1r subcomponent-like protein (C1rl) (Rattus norvegicus (Rat)).